The following is a 313-amino-acid chain: Ribosomal RNA small subunit methyltransferase H (313 aa).

S-adenosyl-L-methionine contacts are provided by residues 35–37, Asp55, Phe79, Asp101, and Gln108; that span reads GGH.

The protein belongs to the methyltransferase superfamily. RsmH family.

The protein resides in the cytoplasm. The enzyme catalyses cytidine(1402) in 16S rRNA + S-adenosyl-L-methionine = N(4)-methylcytidine(1402) in 16S rRNA + S-adenosyl-L-homocysteine + H(+). In terms of biological role, specifically methylates the N4 position of cytidine in position 1402 (C1402) of 16S rRNA. This is Ribosomal RNA small subunit methyltransferase H from Shigella flexneri serotype 5b (strain 8401).